We begin with the raw amino-acid sequence, 122 residues long: Large ribosomal subunit protein uL14 (122 aa).

Belongs to the universal ribosomal protein uL14 family. In terms of assembly, part of the 50S ribosomal subunit. Forms a cluster with proteins L3 and L19. In the 70S ribosome, L14 and L19 interact and together make contacts with the 16S rRNA in bridges B5 and B8.

Binds to 23S rRNA. Forms part of two intersubunit bridges in the 70S ribosome. The sequence is that of Large ribosomal subunit protein uL14 from Xylella fastidiosa (strain 9a5c).